Reading from the N-terminus, the 213-residue chain is 5-oxoprolinase subunit B (213 aa).

The protein belongs to the PxpB family. Forms a complex composed of PxpA, PxpB and PxpC.

It carries out the reaction 5-oxo-L-proline + ATP + 2 H2O = L-glutamate + ADP + phosphate + H(+). Its function is as follows. Catalyzes the cleavage of 5-oxoproline to form L-glutamate coupled to the hydrolysis of ATP to ADP and inorganic phosphate. This Haemophilus influenzae (strain ATCC 51907 / DSM 11121 / KW20 / Rd) protein is 5-oxoprolinase subunit B.